The primary structure comprises 145 residues: MKKIYMLVALLISSLVLFAGCVQNETSEVPTLTVAYLPTDHHASLFVACDNPDLFKDKYGICLKAVKDKEEYELYKGNKKIANVKVVKVTEGGASIMNLMTQGQVDVALLGYPPVIFYIDKGTKAKVIMNLHTEVLQLLLERIFQ.

A helical membrane pass occupies residues 4–24 (IYMLVALLISSLVLFAGCVQN).

Its subcellular location is the membrane. This is an uncharacterized protein from Methanocaldococcus jannaschii (strain ATCC 43067 / DSM 2661 / JAL-1 / JCM 10045 / NBRC 100440) (Methanococcus jannaschii).